We begin with the raw amino-acid sequence, 563 residues long: MLPPALLRRSLLSYAWRGSGLRWKHASSLKVANEPILAFTQGSPERDALQKALNDLKDQTEAIPCVVGDEEVWTSDVRYQLSPFNHGHKVAKFCYADKALLNKAIEAAVLARKEWDLKPVADRAQIFLKAADMLSGPRRAEILAKTMVGQGKTVIQAEIDAAAELIDFFRFNAKFAVELEGEQPISVPPSTNHVVYRGLEGFVAAISPFNFTAIGGNLAGAPALMGNVVLWKPSDTAMLASYAVYRILREAGLPPNVIQFVPADGPTFGDTVTSSEHLCGINFTGSVPTFKHLWKQVAQNLDRFRTFPRLAGECGGKNFHFVHSSADVDSVVSGTLRSAFEYGGQKCSACSRLYVPQSLWPQIKGRLLEEHSRIKVGNPAEDFGTFFSAVIDAKAFARIKKWLEHARSSPSLSILAGGQCNESVGYFVEPCIIESKDPQEPIMKEEIFGPVLTVYVYPDEKYRETLQLVDSTTSYGLTGAVFAQDKTIVQEATRMLRNAAGNFYINDKSTGSVVGQQPFGGARASGERDIPGQPRLVQLWTEPPFTPLAVSPPLGDWRYSYMQ.

A mitochondrion-targeting transit peptide spans 1–23; the sequence is MLPPALLRRSLLSYAWRGSGLRW. Lysine 30 carries the post-translational modification N6-succinyllysine. Serine 43 is subject to Phosphoserine. Lysine 51 bears the N6-acetyllysine mark. An N6-acetyllysine; alternate mark is found at lysine 92, lysine 98, lysine 113, lysine 129, and lysine 174. 5 positions are modified to N6-succinyllysine; alternate: lysine 92, lysine 98, lysine 113, lysine 129, and lysine 174. NAD(+) is bound by residues serine 207, lysine 232, and 285 to 289; that span reads GSVPT. The active-site Proton acceptor is the glutamate 313. Residue lysine 317 is modified to N6-acetyllysine. Lysine 346 carries the N6-succinyllysine modification. The active-site Nucleophile is cysteine 347. N6-acetyllysine occurs at positions 364 and 375. An N6-succinyllysine modification is found at lysine 394. An NAD(+)-binding site is contributed by glutamate 446. Residue lysine 461 is modified to N6-acetyllysine. N6-acetyllysine; alternate is present on lysine 508. Lysine 508 bears the N6-succinyllysine; alternate mark. Serine 512 contacts substrate.

Belongs to the aldehyde dehydrogenase family. Homodimer.

Its subcellular location is the mitochondrion matrix. The enzyme catalyses L-glutamate 5-semialdehyde + NAD(+) + H2O = L-glutamate + NADH + 2 H(+). It participates in amino-acid degradation; L-proline degradation into L-glutamate; L-glutamate from L-proline: step 2/2. Its function is as follows. Irreversible conversion of delta-1-pyrroline-5-carboxylate (P5C), derived either from proline or ornithine, to glutamate. This is a necessary step in the pathway interconnecting the urea and tricarboxylic acid cycles. The preferred substrate is glutamic gamma-semialdehyde, other substrates include succinic, glutaric and adipic semialdehydes. The sequence is that of Delta-1-pyrroline-5-carboxylate dehydrogenase, mitochondrial (Aldh4a1) from Rattus norvegicus (Rat).